The following is a 692-amino-acid chain: Protein artemis (692 aa).

Position 380 is a phosphothreonine (threonine 380). Serine 385 bears the Phosphoserine mark. 2 disordered regions span residues 503 to 555 (RLEN…DSQS) and 640 to 660 (STNA…PEAE). Residues 507-520 (FPSSTEAGGSQSPK) show a composition bias toward polar residues. Low complexity predominate over residues 530–543 (THISSQNSSQSTHI). Polar residues-rich tracts occupy residues 544-555 (TEQGSQGWDSQS) and 640-650 (STNADSQSSSD). Serine 645 is subject to Phosphoserine; by ATM.

The protein belongs to the DNA repair metallo-beta-lactamase (DRMBL) family. As to quaternary structure, interacts with LIG4; the interaction is direct. Interacts with ATM. Interacts with BRCA1. Interacts with PRKDC. Interacts with TP53BP1. Also exhibits ATM- and phosphorylation-dependent interaction with the MRN complex, composed of MRE11, RAD50, and NBN. Post-translationally, phosphorylation on undefined residues by PRKDC may stimulate endonucleolytic activity on 5' and 3' hairpins and overhangs. PRKDC must remain present, even after phosphorylation, for efficient hairpin opening. Also phosphorylated by ATM in response to ionizing radiation (IR) and by ATR in response to ultraviolet (UV) radiation.

The protein resides in the nucleus. In terms of biological role, required for V(D)J recombination, the process by which exons encoding the antigen-binding domains of immunoglobulins and T-cell receptor proteins are assembled from individual V, (D), and J gene segments. V(D)J recombination is initiated by the lymphoid specific RAG endonuclease complex, which generates site specific DNA double strand breaks (DSBs). These DSBs present two types of DNA end structures: hairpin sealed coding ends and phosphorylated blunt signal ends. These ends are independently repaired by the non homologous end joining (NHEJ) pathway to form coding and signal joints respectively. This protein exhibits single-strand specific 5'-3' exonuclease activity in isolation, and acquires endonucleolytic activity on 5' and 3' hairpins and overhangs when in a complex with PRKDC. The latter activity is required specifically for the resolution of closed hairpins prior to the formation of the coding joint. May also be required for the repair of complex DSBs induced by ionizing radiation, which require substantial end-processing prior to religation by NHEJ. The protein is Protein artemis (DCLRE1C) of Pongo abelii (Sumatran orangutan).